Reading from the N-terminus, the 262-residue chain is Phosphatidylserine decarboxylase proenzyme (262 aa).

Active-site charge relay system; for autoendoproteolytic cleavage activity residues include Asp-86, His-142, and Ser-226. Catalysis depends on Ser-226, which acts as the Schiff-base intermediate with substrate; via pyruvic acid; for decarboxylase activity. Ser-226 carries the pyruvic acid (Ser); by autocatalysis modification.

Belongs to the phosphatidylserine decarboxylase family. PSD-B subfamily. Prokaryotic type I sub-subfamily. As to quaternary structure, heterodimer of a large membrane-associated beta subunit and a small pyruvoyl-containing alpha subunit. Pyruvate serves as cofactor. In terms of processing, is synthesized initially as an inactive proenzyme. Formation of the active enzyme involves a self-maturation process in which the active site pyruvoyl group is generated from an internal serine residue via an autocatalytic post-translational modification. Two non-identical subunits are generated from the proenzyme in this reaction, and the pyruvate is formed at the N-terminus of the alpha chain, which is derived from the carboxyl end of the proenzyme. The autoendoproteolytic cleavage occurs by a canonical serine protease mechanism, in which the side chain hydroxyl group of the serine supplies its oxygen atom to form the C-terminus of the beta chain, while the remainder of the serine residue undergoes an oxidative deamination to produce ammonia and the pyruvoyl prosthetic group on the alpha chain. During this reaction, the Ser that is part of the protease active site of the proenzyme becomes the pyruvoyl prosthetic group, which constitutes an essential element of the active site of the mature decarboxylase.

The protein resides in the cell membrane. The catalysed reaction is a 1,2-diacyl-sn-glycero-3-phospho-L-serine + H(+) = a 1,2-diacyl-sn-glycero-3-phosphoethanolamine + CO2. It participates in phospholipid metabolism; phosphatidylethanolamine biosynthesis; phosphatidylethanolamine from CDP-diacylglycerol: step 2/2. Catalyzes the formation of phosphatidylethanolamine (PtdEtn) from phosphatidylserine (PtdSer). In Bacillus mycoides (strain KBAB4) (Bacillus weihenstephanensis), this protein is Phosphatidylserine decarboxylase proenzyme.